The following is an 808-amino-acid chain: MLMTKPPVPQLNLTAVHEAAERAARAIPPLWPLESSVAVNPFLGQIGEPLAVAAARLRRVAGAAVTMPRAWYAERIASGELSDVDLAAAIDAATPTTRPLTIAELKRAAQMEIAPPQALPTVADLASAVSGFDWTGFVAERISAWASGYFDRGQALWAAPKGPNAYAAWRLTATHDLTPEIFSITGFAADVAAAPESADAALIRAVEQLGLSEAASESYFHRLLVGLGGWAQLARYRLWQAELSGSTDTTVTDLLAVRAVWDSALLRKYQPQIAAEWTDAINGYAQPLQPTEDDQINAILQDAVERAAQRKLQTVLTASSQPKPEDRPALQMAFCIDVRSEPFRRALESLDPRIRTLGFGGFFGLPIAHRRFASDVVEARLPVLLPPRVTTSCSGHTHAHEANDRAKRVAARAKRAWGRFKLAAISSFAFVESMGPVYVAKLLSDGLRPGTRTTNTDPVPQFDPPLALGARVDTAEAVLRAMSLTGPFAPLVLIAGHGASVVNNPHASALHCGACGGFPGDVNARLLAGLLNDPEVRTALAGRDIAIPADTLFVGALHDTTTDAVTLYDADHHSPAHAAALAQTRDWLATAGALTRSERALRLPRAATGGAIARRARDWAEVRPEWALAGCRAFIAAPRSHTSGRDLQGQAFLHDYDWRKDTDFSVLELILTAPVVVASWISLQYYGSTVAPETFGAGNKLLHNVTGGIGVVEGNGGLLRSGLPWQSVHDGERLVHQPLRLSVLIEAPHEAISTILDRYPEVRALFDNGWMHLLALDDNGRMHWRYGGDGGWERADNPPANQRVASFE.

Residues C335, D337, H497, and C512 each coordinate Zn(2+).

This sequence belongs to the inorganic carbon transporter (TC 9.A.2) DabA family. Forms a complex with DabB. Zn(2+) is required as a cofactor.

The protein localises to the cell inner membrane. Functionally, part of an energy-coupled inorganic carbon pump. The chain is Probable inorganic carbon transporter subunit DabA from Rhodopseudomonas palustris (strain TIE-1).